Consider the following 445-residue polypeptide: Sodium/proton-dependent alanine carrier protein (445 aa).

Transmembrane regions (helical) follow at residues 41-61 (IAYGGPGAVFWMWVITFIGAA), 103-123 (AAIILSMAVLMPGIQANSIAD), 129-149 (FGIPKLVTGIFVIAVLGFTIF), 159-179 (AEIVVPFMAVGYLFVAIAIIA), 188-208 (VFGLIFKSAFGADQVFGGILG), 249-269 (AFSIYLDVFLVVTATALMILF), 304-324 (TLFPGFGSAFIAIALFFFAFT), 349-369 (AFFALKLVFLAATFYGTVKTA), and 375-395 (MGDIGLGIMVWLNLIAILLLF).

The protein belongs to the alanine or glycine:cation symporter (AGCS) (TC 2.A.25) family. In terms of processing, the N-terminus is blocked.

The protein resides in the cell membrane. Functionally, mediates the active transport of alanine, driven by either an H(+) or Na(+) gradient. The sequence is that of Sodium/proton-dependent alanine carrier protein from Bacillus sp. (strain PS3).